The following is a 461-amino-acid chain: Protein-serine O-palmitoleoyltransferase porcupine (461 aa).

Topologically, residues 1–17 (MATFSRQEFFQQLLQGC) are cytoplasmic. A helical membrane pass occupies residues 18–38 (LLPTAQQGLDQIWLLLAICLA). At 39-66 (CRLLWRLGLPSYLKHASTVAGGFFSLYH) the chain is on the extracellular side. A helical membrane pass occupies residues 67-87 (FFQLHMVWVVLLSLLCYLVLF). The Cytoplasmic segment spans residues 88 to 95 (LCRHSSHR). A helical transmembrane segment spans residues 96–116 (GVFLSVTILIYLLMGEMHMVD). The Extracellular segment spans residues 117-152 (TVTWHKMRGAQMIVAMKAVSLGFDLDRGEVGTVPSP). A helical membrane pass occupies residues 153–173 (VEFMGYLYFVGTIVFGPWISF). The Cytoplasmic segment spans residues 174 to 198 (HSYLQAVQGRPLSCRWLQKVARSLA). The S-palmitoyl cysteine moiety is linked to residue cysteine 187. Residues 199-219 (LALLCLVLSTCVGPYLFPYFI) form a helical membrane-spanning segment. Topologically, residues 220 to 252 (PLNGDRLLRNKKRKARGTMVRWLRAYESAVSFH) are extracellular. The helical transmembrane segment at 253 to 273 (FSNYFVGFLSEATATLAGAGF) threads the bilayer. The Cytoplasmic segment spans residues 274–337 (TEEKDHLEWD…SAVLVTYAAS (64 aa)). A helical membrane pass occupies residues 338–358 (ALLHGFSFHLAAVLLSLAFIT). Histidine 341 is a catalytic residue. Topologically, residues 359–396 (YVEHVLRKRLARILSACVLSKRCPPDCSHQHRLGLGVR) are extracellular. The helical transmembrane segment at 397–417 (ALNLLFGALAIFHLAYLGSLF) threads the bilayer. Residues 418 to 461 (DVDVDDTTEEQGYGMAYTVHKWSELSWASHWVTFGCWIFYRLIG) lie on the Cytoplasmic side of the membrane.

This sequence belongs to the membrane-bound acyltransferase family. Porcupine subfamily. Interacts with WNT1, WNT3, WNT3A, WNT4, WNT5A, WNT5B, WNT6, WNT7A and WNT7B. Isoform 1 is expressed in fetal brain, brain, amygdala, caudate nucleus, cerebellum, hippocampus, pituitary, thalamus, heart, skeletal muscle and testis. Isoform 4 is expressed in amygdala, corpus callosum, hippocampus, spinal cord, kidney, liver, lung, spleen, uterus, testis. Isoform 2 and isoform 3 are expressed in substantia negra, spinal cord, heart and lung.

It localises to the endoplasmic reticulum membrane. It carries out the reaction [Wnt protein]-L-serine + (9Z)-hexadecenoyl-CoA = [Wnt protein]-O-(9Z)-hexadecenoyl-L-serine + CoA. Protein-serine O-palmitoleoyltransferase that acts as a key regulator of the Wnt signaling pathway by mediating the attachment of palmitoleate, a 16-carbon monounsaturated fatty acid (C16:1(9Z)), to Wnt proteins. Serine palmitoleoylation of WNT proteins is required for efficient binding to frizzled receptors. This is Protein-serine O-palmitoleoyltransferase porcupine from Homo sapiens (Human).